We begin with the raw amino-acid sequence, 159 residues long: Globin CTT-W (159 aa).

A signal peptide spans 1-16 (MKFLVILTLCIAGAIA). In terms of domain architecture, Globin spans 17 to 159 (HCDKAPFIKA…HHAIVYSILE (143 aa)). Residues histidine 73 and histidine 108 each contribute to the heme b site.

Belongs to the globin family.

The protein is Globin CTT-W (CTT-W) of Chironomus thummi thummi (Midge).